The following is a 510-amino-acid chain: Coatomer subunit delta (510 aa).

Positions 270-510 constitute an MHD domain; that stretch reads MESVHMKIEE…TFLVDKYEIL (241 aa).

The protein belongs to the adaptor complexes medium subunit family. Delta-COP subfamily. Oligomeric complex that consists of at least the alpha, beta, beta', gamma, delta, epsilon and zeta subunits.

It localises to the cytoplasm. Its subcellular location is the golgi apparatus membrane. The protein localises to the cytoplasmic vesicle. It is found in the COPI-coated vesicle membrane. The coatomer is a cytosolic protein complex that binds to dilysine motifs and reversibly associates with Golgi non-clathrin-coated vesicles, which further mediate biosynthetic protein transport from the ER, via the Golgi up to the trans Golgi network. Coatomer complex is required for budding from Golgi membranes, and is essential for the retrograde Golgi-to-ER transport of dilysine-tagged proteins. In mammals, the coatomer can only be recruited by membranes associated to ADP-ribosylation factors (ARFs), which are small GTP-binding proteins; the complex also influences the Golgi structural integrity, as well as the processing, activity, and endocytic recycling of LDL receptors. This is Coatomer subunit delta (ARCN1) from Gallus gallus (Chicken).